The chain runs to 103 residues: N(4)-acetylcytidine amidohydrolase (103 aa).

The region spanning 6-94 is the ASCH domain; that stretch reads ITFFQRFQND…IAEIYPNQTQ (89 aa). The Proton acceptor role is filled by Lys-21. The Nucleophile role is filled by Thr-24. Glu-74 serves as the catalytic Proton donor.

It belongs to the N(4)-acetylcytidine amidohydrolase family.

The enzyme catalyses N(4)-acetylcytidine + H2O = cytidine + acetate + H(+). The catalysed reaction is N(4)-acetyl-2'-deoxycytidine + H2O = 2'-deoxycytidine + acetate + H(+). It catalyses the reaction N(4)-acetylcytosine + H2O = cytosine + acetate + H(+). In terms of biological role, catalyzes the hydrolysis of N(4)-acetylcytidine (ac4C). This is N(4)-acetylcytidine amidohydrolase (yqfB) from Salmonella heidelberg (strain SL476).